Reading from the N-terminus, the 272-residue chain is Cell wall synthesis protein Wag31 (272 aa).

2 disordered regions span residues M1 to G22 and A62 to T109. Positions A30 to A67 form a coiled coil. 2 stretches are compositionally biased toward low complexity: residues A62–S76 and V94–Q105. T74 is subject to Phosphothreonine. Residues L139–G206 adopt a coiled-coil conformation. The disordered stretch occupies residues E243–N272.

Belongs to the DivIVA family. In terms of assembly, forms homooligomers. Interacts with PbpB and CwsA. Phosphorylated by PknA.

The protein localises to the cytoplasm. Important for maintaining cell shape and cell wall integrity by localizing peptidoglycan synthesis to the cell poles. Protects PbpB (PBP3, FtsI) from oxidative stress-induced cleavage. The polypeptide is Cell wall synthesis protein Wag31 (wag31) (Mycolicibacterium smegmatis (strain ATCC 700084 / mc(2)155) (Mycobacterium smegmatis)).